Here is a 137-residue protein sequence, read N- to C-terminus: Translation initiation factor 2 subunit beta (137 aa).

Belongs to the eIF-2-beta/eIF-5 family. In terms of assembly, heterotrimer composed of an alpha, a beta and a gamma chain.

Its function is as follows. eIF-2 functions in the early steps of protein synthesis by forming a ternary complex with GTP and initiator tRNA. The sequence is that of Translation initiation factor 2 subunit beta (eif2b) from Archaeoglobus fulgidus (strain ATCC 49558 / DSM 4304 / JCM 9628 / NBRC 100126 / VC-16).